The following is a 337-amino-acid chain: Monoacylglycerol lipase abhd6-B (337 aa).

Over 1–19 the chain is Extracellular; the sequence is MDIDVLNMFLVAGGTLLVP. The helical; Signal-anchor for type II membrane protein transmembrane segment at 20–42 threads the bilayer; it reads LLAFMTSFLLWPAALIRIYYWYW. At 43–337 the chain is on the cytoplasmic side; sequence RRALGMQVKY…QSTDNHKKHD (295 aa). In terms of domain architecture, AB hydrolase-1 spans 72-313; sequence PSVLMLHGFS…CGHSVVMERP (242 aa). The active-site Nucleophile is Ser-148. Active-site charge relay system residues include Asp-278 and His-306.

Belongs to the AB hydrolase superfamily.

The protein localises to the late endosome membrane. It is found in the lysosome membrane. The protein resides in the mitochondrion membrane. The enzyme catalyses Hydrolyzes glycerol monoesters of long-chain fatty acids.. The catalysed reaction is 1-octanoylglycerol + H2O = octanoate + glycerol + H(+). It catalyses the reaction 1-decanoylglycerol + H2O = decanoate + glycerol + H(+). It carries out the reaction 1-dodecanoylglycerol + H2O = dodecanoate + glycerol + H(+). The enzyme catalyses 1-tetradecanoylglycerol + H2O = tetradecanoate + glycerol + H(+). The catalysed reaction is 2-hexadecanoylglycerol + H2O = glycerol + hexadecanoate + H(+). It catalyses the reaction 2-(9Z-octadecenoyl)-glycerol + H2O = glycerol + (9Z)-octadecenoate + H(+). It carries out the reaction 1-(9Z-octadecenoyl)-glycerol + H2O = glycerol + (9Z)-octadecenoate + H(+). The enzyme catalyses 2-(9Z,12Z-octadecadienoyl)-glycerol + H2O = (9Z,12Z)-octadecadienoate + glycerol + H(+). The catalysed reaction is 2-(5Z,8Z,11Z,14Z-eicosatetraenoyl)-glycerol + H2O = glycerol + (5Z,8Z,11Z,14Z)-eicosatetraenoate + H(+). It catalyses the reaction 1-(5Z,8Z,11Z,14Z-eicosatetraenoyl)-glycerol + H2O = glycerol + (5Z,8Z,11Z,14Z)-eicosatetraenoate + H(+). It carries out the reaction 1-(9Z,12Z-octadecadienoyl)-glycerol + H2O = (9Z,12Z)-octadecadienoate + glycerol + H(+). The enzyme catalyses 3-(9Z-octadecenoyl)-sn-glycero-1-phospho-(3'-(9Z-octadecenoyl)-1'-sn-glycerol) + H2O = 3-(9Z-octadecenoyl)-sn-glycero-1-phospho-(1'-sn-glycerol) + (9Z)-octadecenoate + H(+). The catalysed reaction is (S,S)-2-(9Z-octadecenoyl)-sn-glycero-1-phospho-(2'-(9Z-octadecenoyl)-1'-sn-glycerol) + H2O = (S,S)-2-(9Z-octadecenoyl)-sn-glycero-1-phospho-(1'-sn-glycerol) + (9Z)-octadecenoate + H(+). It catalyses the reaction (R,R)-2-(9Z-octadecenoyl)-sn-glycero-3-phospho-(2'-(9Z-octadecenoyl)-3'-sn-glycerol) + H2O = (R,R)-2-(9Z-octadecenoyl)-sn-glycero-3-phospho-(3'-sn-glycerol) + (9Z)-octadecenoate + H(+). Lipase that preferentially hydrolysis medium-chain saturated monoacylglycerols including 2-arachidonoylglycerol. Through 2-arachidonoylglycerol degradation may regulate endocannabinoid signaling pathways. Also has a lysophosphatidyl lipase activity with a preference for lysophosphatidylglycerol among other lysophospholipids. Also able to degrade bis(monoacylglycero)phosphate (BMP) and constitutes the major enzyme for BMP catabolism. BMP, also known as lysobisphosphatidic acid, is enriched in late endosomes and lysosomes and plays a key role in the formation of intraluminal vesicles and in lipid sorting. This chain is Monoacylglycerol lipase abhd6-B (abhd6-b), found in Xenopus laevis (African clawed frog).